The primary structure comprises 243 residues: MTNGPQPLYRRVLLKMSGEALMGKGLHAIDPNVLDRMAKDVTQVYQLGVQIAIVIGGGNFFRGAALQAAGINRITGDYMGMLATLMNALALRDAFERSNLPVRILSAIPMTGVADAFHRRKAIHHLQQGRVVIFAAGTGNPLVTTDSAASLRGIEINADVVLKATNVDGVYSDDPAKNPQAKLYKHLSYQEALKKELAVMDLAAFCQCRDYNMPLRVFNINKPGALLSVIMNQEEGTLVDQGQ.

ATP is bound at residue 15–18 (KMSG). Residue Gly57 participates in UMP binding. ATP-binding residues include Gly58 and Arg62. UMP-binding positions include Asp77 and 138-145 (TGNPLVTT). ATP is bound by residues Thr165, Asn166, Tyr171, and Asp174.

Belongs to the UMP kinase family. As to quaternary structure, homohexamer.

The protein resides in the cytoplasm. The catalysed reaction is UMP + ATP = UDP + ADP. Its pathway is pyrimidine metabolism; CTP biosynthesis via de novo pathway; UDP from UMP (UMPK route): step 1/1. With respect to regulation, inhibited by UTP. Functionally, catalyzes the reversible phosphorylation of UMP to UDP. The sequence is that of Uridylate kinase from Coxiella burnetii (strain RSA 493 / Nine Mile phase I).